The primary structure comprises 187 residues: Putative protein SSX8 (187 aa).

Disordered stretches follow at residues 1–21 (MNGD…SEKR) and 109–187 (PKIM…EDDE). A KRAB-related domain is found at 20 to 83 (KRSKAFNDIA…KQATDFQGNY (64 aa)). At serine 123 the chain carries Phosphoserine. The span at 152 to 168 (KRSGPKRGRHAWTHRLR) shows a compositional bias: basic residues.

It belongs to the SSX family. In terms of tissue distribution, not detected in any normal or tumor tissues.

Could act as a modulator of transcription. This Homo sapiens (Human) protein is Putative protein SSX8.